The primary structure comprises 757 residues: 5-methyltetrahydropteroyltriglutamate--homocysteine methyltransferase (757 aa).

5-methyltetrahydropteroyltri-L-glutamate-binding positions include 17-20 (RELK) and Lys-117. L-homocysteine contacts are provided by residues 434 to 436 (IGS) and Glu-487. L-methionine is bound by residues 434-436 (IGS) and Glu-487. Residues 518–519 (RC) and Trp-564 contribute to the 5-methyltetrahydropteroyltri-L-glutamate site. An L-homocysteine-binding site is contributed by Asp-602. Asp-602 lines the L-methionine pocket. Position 608 (Glu-608) interacts with 5-methyltetrahydropteroyltri-L-glutamate. 3 residues coordinate Zn(2+): His-644, Cys-646, and Glu-668. His-697 functions as the Proton donor in the catalytic mechanism. Residue Cys-729 participates in Zn(2+) binding.

The protein belongs to the vitamin-B12 independent methionine synthase family. Zn(2+) serves as cofactor.

The enzyme catalyses 5-methyltetrahydropteroyltri-L-glutamate + L-homocysteine = tetrahydropteroyltri-L-glutamate + L-methionine. It functions in the pathway amino-acid biosynthesis; L-methionine biosynthesis via de novo pathway; L-methionine from L-homocysteine (MetE route): step 1/1. Catalyzes the transfer of a methyl group from 5-methyltetrahydrofolate to homocysteine resulting in methionine formation. This is 5-methyltetrahydropteroyltriglutamate--homocysteine methyltransferase from Proteus mirabilis (strain HI4320).